Here is a 191-residue protein sequence, read N- to C-terminus: MSEKKNKKEKLAEEIEQEELNSLDESVETVEEEATEETLTEEQAKILELENKLDEVENRYLRMQADFENVKKRHIADRDASQKYRSQSLAQDLLPALDSFEKALATTSDQEEVKQILKGMEMVYNQILVAFEKEGIEVIPAVGEQFDPNFHQAVMQDSDENAGSNEITAELQKGYKLKDRVIRPSMVKVNQ.

Basic and acidic residues predominate over residues Met-1 to Glu-13. The interval Met-1–Thr-40 is disordered. Over residues Glu-14–Thr-40 the composition is skewed to acidic residues.

Belongs to the GrpE family. Homodimer.

Its subcellular location is the cytoplasm. Functionally, participates actively in the response to hyperosmotic and heat shock by preventing the aggregation of stress-denatured proteins, in association with DnaK and GrpE. It is the nucleotide exchange factor for DnaK and may function as a thermosensor. Unfolded proteins bind initially to DnaJ; upon interaction with the DnaJ-bound protein, DnaK hydrolyzes its bound ATP, resulting in the formation of a stable complex. GrpE releases ADP from DnaK; ATP binding to DnaK triggers the release of the substrate protein, thus completing the reaction cycle. Several rounds of ATP-dependent interactions between DnaJ, DnaK and GrpE are required for fully efficient folding. The sequence is that of Protein GrpE from Listeria innocua serovar 6a (strain ATCC BAA-680 / CLIP 11262).